The following is a 372-amino-acid chain: 4-hydroxy-3-methylbut-2-en-1-yl diphosphate synthase (flavodoxin) (372 aa).

[4Fe-4S] cluster is bound by residues C270, C273, C305, and E312.

The protein belongs to the IspG family. It depends on [4Fe-4S] cluster as a cofactor.

It carries out the reaction (2E)-4-hydroxy-3-methylbut-2-enyl diphosphate + oxidized [flavodoxin] + H2O + 2 H(+) = 2-C-methyl-D-erythritol 2,4-cyclic diphosphate + reduced [flavodoxin]. The protein operates within isoprenoid biosynthesis; isopentenyl diphosphate biosynthesis via DXP pathway; isopentenyl diphosphate from 1-deoxy-D-xylulose 5-phosphate: step 5/6. Its function is as follows. Converts 2C-methyl-D-erythritol 2,4-cyclodiphosphate (ME-2,4cPP) into 1-hydroxy-2-methyl-2-(E)-butenyl 4-diphosphate. In Cronobacter sakazakii (strain ATCC BAA-894) (Enterobacter sakazakii), this protein is 4-hydroxy-3-methylbut-2-en-1-yl diphosphate synthase (flavodoxin).